The sequence spans 374 residues: C-C chemokine receptor type 2 (374 aa).

Topologically, residues 1–42 (MLSTSRSRFIRNTNESGEEVTTFFDYDYGAPCHKFDVKQIGA) are extracellular. N-linked (GlcNAc...) asparagine glycosylation occurs at asparagine 14. Position 26 is a sulfotyrosine (tyrosine 26). A helical transmembrane segment spans residues 43–70 (QLLPPLYSLVFIFGFVGNMLVVLILINC). The Cytoplasmic portion of the chain corresponds to 71 to 80 (KKLKCLTDIY). Residues 81 to 100 (LLNLAISDLLFLITLPLWAH) form a helical membrane-spanning segment. Residues 101–114 (SAANEWVFGNAMCK) lie on the Extracellular side of the membrane. A disulfide bridge connects residues cysteine 113 and cysteine 190. The chain crosses the membrane as a helical span at residues 115 to 136 (LFTGLYHIGYFGGIFFIILLTI). Residues 137-153 (DRYLAIVHAVFALKART) are Cytoplasmic-facing. Phosphotyrosine; by JAK2 is present on tyrosine 139. Residues 154-178 (VTFGVVTSVITWLVAVFASVPGIIF) traverse the membrane as a helical segment. Residues 179–206 (TKCQKEDSVYVCGPYFPRGWNNFHTIMR) lie on the Extracellular side of the membrane. A helical transmembrane segment spans residues 207–226 (NILGLVLPLLIMVICYSGIL). At 227 to 243 (KTLLRCRNEKKRHRAVR) the chain is on the cytoplasmic side. The helical transmembrane segment at 244-268 (VIFTIMIVYFLFWTPYNIVILLNTF) threads the bilayer. The Extracellular portion of the chain corresponds to 269-285 (QEFFGLSNCESTSQLDQ). The chain crosses the membrane as a helical span at residues 286-309 (ATQVTETLGMTHCCINPIIYAFVG). Residues 310–374 (EKFRSLFHIA…EASLQDKEGA (65 aa)) lie on the Cytoplasmic side of the membrane. A disordered region spans residues 348-374 (QGLLDGRGKGKSIGRAPEASLQDKEGA).

It belongs to the G-protein coupled receptor 1 family. As to quaternary structure, interacts with ARRB1. Interacts (via extracellular N-terminal region) with beta-defensin DEFB106A/DEFB106B; this interaction may preferentially require specific tyrosine sulfation on CCR2. Interacts with NUP85; the interaction is required for CCR2 clusters formation on the cell membrane and CCR2 signaling. (Microbial infection) Binds to HIV-1 Tat. N-glycosylated. In terms of processing, sulfation increases the affinity for both monomeric and dimeric CCL2 with stronger binding to the monomeric form. Binding of sulfated CCR2 to CCL2 promotes conversion of CCL2 from dimer to monomer. Expressed by monocytes and IL2-activated NK cells. Abundantly expressed on CD14+/CD16- monocytes and weakly on CD14+/CD16+ monocytes, type 2 dendritic cells (DCs) and plasmacytoid DCs (at protein level).

The protein resides in the cell membrane. Key functional receptor for CCL2 but can also bind CCL7, and CCL12. Also transduces signaling mediated by CCL13. Its binding with CCL2 on monocytes and macrophages mediates chemotaxis and migration induction through the activation of the PI3K cascade, the small G protein Rac and lamellipodium protrusion. Also acts as a receptor for the beta-defensin DEFB106A/DEFB106B. Regulates the expression of T-cell inflammatory cytokines and T-cell differentiation, promoting the differentiation of T-cells into T-helper 17 cells (Th17) during inflammation. Facilitates the export of mature thymocytes by enhancing directional movement of thymocytes to sphingosine-1-phosphate stimulation and up-regulation of S1P1R expression; signals through the JAK-STAT pathway to regulate FOXO1 activity leading to an increased expression of S1P1R. Plays an important role in mediating peripheral nerve injury-induced neuropathic pain. Increases NMDA-mediated synaptic transmission in both dopamine D1 and D2 receptor-containing neurons, which may be caused by MAPK/ERK-dependent phosphorylation of GRIN2B/NMDAR2B. Mediates the recruitment of macrophages and monocytes to the injury site following brain injury. Functionally, (Microbial infection) Alternative coreceptor with CD4 for HIV-1 infection. The protein is C-C chemokine receptor type 2 (CCR2) of Homo sapiens (Human).